We begin with the raw amino-acid sequence, 130 residues long: MIQTQNYGTGRRKSSSARVFLRSGNGEIVVNKRSLNEYFGRETSCMIVRQPLELVDMVDKFNIYITVKGGGISGQAGAIRQGITRALIKYNQTLRFELRKAGFITRDSRQVERKKVGFRKARKRPQFSKR.

This sequence belongs to the universal ribosomal protein uS9 family.

The chain is Small ribosomal subunit protein uS9 from Buchnera aphidicola subsp. Acyrthosiphon pisum (strain Tuc7).